Consider the following 360-residue polypeptide: Variable large protein 14 (360 aa).

The signal sequence occupies residues 1–18; it reads MRKRISAIIMTLFMVLAS. A lipid anchor (N-palmitoyl cysteine) is attached at Cys-19. Cys-19 carries the S-diacylglycerol cysteine lipid modification.

This sequence belongs to the variable large protein (Vlp) family. Beta subfamily.

It localises to the cell outer membrane. Functionally, the Vlp and Vsp proteins are antigenically distinct proteins, only one vlp or vsp gene is transcriptionally active at any one time. Switching between these genes is a mechanism of host immune response evasion. The chain is Variable large protein 14 from Borrelia hermsii.